A 141-amino-acid chain; its full sequence is Large ribosomal subunit protein uL11 (141 aa).

It belongs to the universal ribosomal protein uL11 family. In terms of assembly, part of the ribosomal stalk of the 50S ribosomal subunit. Interacts with L10 and the large rRNA to form the base of the stalk. L10 forms an elongated spine to which L12 dimers bind in a sequential fashion forming a multimeric L10(L12)X complex. Post-translationally, one or more lysine residues are methylated.

In terms of biological role, forms part of the ribosomal stalk which helps the ribosome interact with GTP-bound translation factors. This Methylacidiphilum infernorum (isolate V4) (Methylokorus infernorum (strain V4)) protein is Large ribosomal subunit protein uL11.